Reading from the N-terminus, the 316-residue chain is Annexin D5 (316 aa).

A2 is modified (N-acetylalanine). 4 Annexin repeats span residues 11 to 82, 83 to 154, 166 to 238, and 242 to 313; these read PSPR…LWMP, EAVE…AYLN, ASVE…TILQ, and NSCF…SLLG. Residues F24, G26, G28, and E68 each coordinate Ca(2+). A Phosphoserine modification is found at S95. The residue at position 112 (T112) is a Phosphothreonine. G259 is a Ca(2+) binding site. At Y284 the chain carries Phosphotyrosine. Ca(2+) contacts are provided by D299 and T300.

The protein belongs to the annexin (TC 1.A.31.1) family. As to expression, expressed mainly in roots and flowers. Lower in stems and leaves.

This is Annexin D5 (ANN5) from Arabidopsis thaliana (Mouse-ear cress).